Reading from the N-terminus, the 1803-residue chain is 6-methylsalicylic acid synthase (1803 aa).

The tract at residues Met-1–Asn-40 is disordered. The span at Ser-13–Gly-24 shows a compositional bias: low complexity. Positions Gln-44–Glu-470 constitute a Ketosynthase family 3 (KS3) domain. Residues Cys-216, His-351, and His-391 each act as for beta-ketoacyl synthase activity in the active site. Residues Val-581 to Ala-894 form the Malonyl-CoA:ACP transacylase (MAT) domain. Ser-667 serves as the catalytic For malonyltransferase activity. The interval His-940–Asn-1058 is N-terminal hotdog fold. The 279-residue stretch at His-940–Ser-1218 folds into the PKS/mFAS DH domain. His-972 acts as the Proton acceptor; for thioesterase activity in catalysis. Residues Ala-1073–Ser-1218 form a C-terminal hotdog fold region. Asp-1129 (proton donor; for thioesterase activity) is an active-site residue. Residues Thr-1141–Ser-1262 form a required for homotetramer formation region. The Ketoreductase (KR) domain maps to Ser-1434–Arg-1628. A compositionally biased stretch (low complexity) spans Ala-1701–Ala-1710. Residues Ala-1701–Ile-1721 form a disordered region. One can recognise a Carrier domain in the interval Thr-1726–Met-1801. Residue Ser-1761 is modified to O-(pantetheine 4'-phosphoryl)serine. The tract at residues Leu-1783–Asn-1803 is required for catalytic activity.

Homotetramer.

The catalysed reaction is 3 malonyl-CoA + acetyl-CoA + NADPH + 3 H(+) = 6-methylsalicylate + 3 CO2 + NADP(+) + 4 CoA + H2O. The protein operates within secondary metabolite biosynthesis. Functionally, 6-methylsalicylic acid synthase; part of the gene cluster that mediates the biosynthesis of terreic acid, a quinone epoxide inhibitor of Bruton's tyrosine kinase. The first step of the pathway is the synthesis of 6-methylsalicylic acid (6-MSA) by the 6-methylsalicylic acid synthase atX. In the biosynthesis of 6-MSA, atX utilizes one acetyl-CoA and three malonyl-CoAs as its substrates and catalyzes a series of programmed reactions including Claisen condensation, reduction, aldol cyclization, and the hydrolytic cleavage that yields 6-MSA. The 6-methylsalicylate 1-monooxygenase atA then catalyzes the decarboxylative hydroxylation of 6-MSA to 3-methylcatechol. The next step is the conversion of 3-methylcatechol to 3-methyl-1,2,4-benzenetriol by cytochrome P450 monooxygenase atE, which is enhanced by cytochrome P450 monooxygenase atG. Then, the epoxidase atD catalyzes the epoxidation and hydroxyl oxidation of 3-methyl-1,2,4-benzenetriol to terremutin. Lastly, GMC oxidoreductase atC oxidizes terremutin to terreic acid. In Aspergillus terreus (strain NIH 2624 / FGSC A1156), this protein is 6-methylsalicylic acid synthase.